A 614-amino-acid chain; its full sequence is RNA polymerase sigma factor RpoD (614 aa).

Residues 178–222 (THIGSDLSQSERDKDDSKDDSKDDDEDEEEEGPKGPDPEESKERF) form a disordered region. Basic and acidic residues predominate over residues 186 to 198 (QSERDKDDSKDDS). Positions 199–208 (KDDDEDEEEE) are enriched in acidic residues. Residues 209-222 (GPKGPDPEESKERF) are compositionally biased toward basic and acidic residues. The tract at residues 380–450 (MVEANLRLVI…TRSIADQART (71 aa)) is sigma-70 factor domain-2. The Interaction with polymerase core subunit RpoC signature appears at 404-407 (DLIQ). Positions 459 to 535 (ETINKLNRIS…DTTLELPLDS (77 aa)) are sigma-70 factor domain-3. A sigma-70 factor domain-4 region spans residues 548-601 (VLAGLTAREAKVLRMRFGIDMNTDHTLEEVGKQFDVTRERIRQIEAKALRKLRH). Positions 574–593 (LEEVGKQFDVTRERIRQIEA) form a DNA-binding region, H-T-H motif.

Belongs to the sigma-70 factor family. RpoD/SigA subfamily. Interacts transiently with the RNA polymerase catalytic core.

Its subcellular location is the cytoplasm. In terms of biological role, sigma factors are initiation factors that promote the attachment of RNA polymerase to specific initiation sites and are then released. This sigma factor is the primary sigma factor during exponential growth. The polypeptide is RNA polymerase sigma factor RpoD (Shewanella violacea (strain JCM 10179 / CIP 106290 / LMG 19151 / DSS12)).